Consider the following 847-residue polypeptide: Bifunctional lysine-specific demethylase and histidyl-hydroxylase NO66 (847 aa).

Positions 1–24 are enriched in polar residues; that stretch reads MEKVTNSAAAKPQGNNKKQESAYN. Disordered stretches follow at residues 1-45, 203-223, and 254-320; these read MEKV…SDLL, AEAD…KESV, and AEKE…ERKQ. Residues 203-214 are compositionally biased toward basic and acidic residues; sequence AEADAKNNDTKK. A compositionally biased stretch (low complexity) spans 268–278; the sequence is STSSKEAAAAK. Basic and acidic residues predominate over residues 279–288; it reads TADHERRLLA. Residues 304–314 are compositionally biased toward polar residues; that stretch reads AMESVATQGAS. Position 323 is a phosphoserine (Ser-323). Position 329 is a phosphothreonine (Thr-329). A Phosphoserine modification is found at Ser-330. Residues 377-401 form a disordered region; it reads KAPEEGNNNNDEKEMSTETSETHKT. Basic and acidic residues predominate over residues 386-401; sequence NDEKEMSTETSETHKT. In terms of domain architecture, JmjC spans 499–644; the sequence is CSIRLLNPSA…NLLETLMPMV (146 aa). Positions 545, 547, and 610 each coordinate Fe cation.

The protein belongs to the ROX family. NO66 subfamily. Fe(2+) serves as cofactor.

The protein localises to the nucleus. It carries out the reaction N(6),N(6)-dimethyl-L-lysyl(36)-[histone H3] + 2 2-oxoglutarate + 2 O2 = L-lysyl(36)-[histone H3] + 2 formaldehyde + 2 succinate + 2 CO2. In terms of biological role, oxygenase that can act as both a histone lysine demethylase and a ribosomal histidine hydroxylase. Specifically demethylates 'Lys-4' (H3K4me) and 'Lys-36' (H3K36me) of histone H3, thereby playing a central role in histone code. The polypeptide is Bifunctional lysine-specific demethylase and histidyl-hydroxylase NO66 (Drosophila simulans (Fruit fly)).